Reading from the N-terminus, the 334-residue chain is Mucin-15 (334 aa).

The first 23 residues, 1–23 (MLALAKILLISTLFYSLLSGSHG), serve as a signal peptide directing secretion. Residues 24–236 (KENQDINTTQ…SDPQKENRNT (213 aa)) lie on the Extracellular side of the membrane. N-linked (GlcNAc...) asparagine glycans are attached at residues N30, N61, N79, N90, N148, N155, N163, N218, and N225. The tract at residues 64 to 104 (TSNLKASHSPPLNLPNNSHGITDFSSNSSAEHSLGSLKPTS) is disordered. Residues 77-94 (LPNNSHGITDFSSNSSAE) show a composition bias toward polar residues. A helical transmembrane segment spans residues 237 to 257 (GIVFGAILGAILGVSLLTLVG). At 258-334 (YLLCGKRKTD…DDIPPLRTSV (77 aa)) the chain is on the cytoplasmic side. A disordered region spans residues 304–334 (PTLNDSAMPESEENARDGIPMDDIPPLRTSV).

In terms of processing, highly glycosylated (N- and O-linked carbohydrates). As to expression, expressed in spleen, thymus, prostate, testis, ovary, small intestine, colon, peripheral blood leukocyte, bone marrow, lymph node and lung.

It is found in the cell membrane. The protein resides in the secreted. Functionally, may play a role in the cell adhesion to the extracellular matrix. This Homo sapiens (Human) protein is Mucin-15 (MUC15).